A 169-amino-acid polypeptide reads, in one-letter code: Large ribosomal subunit protein bL19m (169 aa).

A mitochondrion-targeting transit peptide spans 1 to 16 (MWSRNVRLLGSWTRSY).

It belongs to the bacterial ribosomal protein bL19 family. Component of the mitochondrial large ribosomal subunit (mt-LSU). Mature yeast 74S mitochondrial ribosomes consist of a small (37S) and a large (54S) subunit. The 37S small subunit contains a 15S ribosomal RNA (15S mt-rRNA) and 34 different proteins. The 54S large subunit contains a 21S rRNA (21S mt-rRNA) and 46 different proteins.

It localises to the mitochondrion. Functionally, component of the mitochondrial ribosome (mitoribosome), a dedicated translation machinery responsible for the synthesis of mitochondrial genome-encoded proteins, including at least some of the essential transmembrane subunits of the mitochondrial respiratory chain. The mitoribosomes are attached to the mitochondrial inner membrane and translation products are cotranslationally integrated into the membrane. bL19m is essential for respiration. The protein is Large ribosomal subunit protein bL19m (IMG1) of Saccharomyces cerevisiae (strain ATCC 204508 / S288c) (Baker's yeast).